The primary structure comprises 310 residues: Malate dehydrogenase (310 aa).

NAD(+) is bound by residues 7 to 13 (GAAGGIG) and D34. Residues R81 and R87 each coordinate substrate. Residues N94 and 117–119 (ITN) contribute to the NAD(+) site. The substrate site is built by N119 and R153. The Proton acceptor role is filled by H177. M227 is a binding site for NAD(+).

It belongs to the LDH/MDH superfamily. MDH type 1 family. In terms of assembly, homodimer.

The catalysed reaction is (S)-malate + NAD(+) = oxaloacetate + NADH + H(+). Its function is as follows. Catalyzes the reversible oxidation of malate to oxaloacetate. In Vibrio vulnificus (strain CMCP6), this protein is Malate dehydrogenase.